We begin with the raw amino-acid sequence, 494 residues long: MSGSAVVLCILDGWGNGNGDECDAIHAARKPFWESVVSGCPRSSLSASGEDVGLPAAQVGNSEVGHISLGAGRVVLQDLQRINAEIGEIHSNPYLLQFAEAIKNGRGVCHIMGLLSDGGVHGLQDHITQLARVLAELRIKVLIHAFLDGRDVSPRSAKKHVTALNDAVHSYDISIATISGRYYAMDRDHRLDRTEKAYEAIALARGPRYRDAMTAIESSYSEGISDEFLVPSVIGDYQGFSPKDGILLTNFRSDRIVQILSMILHRSQEVSNILGMVRYSEKIQVPSLFPPRNICNTLGEVVSKCGLKQLRIAETEKYAHVTFFFSGGKEEPFPGEDRVIIPSPQVSTYDLQPEMSAFPMTEVLVERIESRQYSLIVVNYANADMVGHTGNLEAVKKAISVIDACLQMVFNAAKKAGATMLITADHGNAEKMFDMRGTPFTAHTSNTVPLVLCNCDKRFGLVDGRLCDVAPTILELMEIAKPDEMTGSSLLTPE.

Mn(2+) contacts are provided by aspartate 12 and serine 62. The active-site Phosphoserine intermediate is serine 62. Substrate contacts are provided by residues histidine 121, 150–151 (RD), arginine 181, arginine 187, 252–255 (RSDR), and lysine 317. Mn(2+) contacts are provided by aspartate 384, histidine 388, aspartate 425, histidine 426, and histidine 443.

This sequence belongs to the BPG-independent phosphoglycerate mutase family. Monomer. Mn(2+) is required as a cofactor.

The catalysed reaction is (2R)-2-phosphoglycerate = (2R)-3-phosphoglycerate. It participates in carbohydrate degradation; glycolysis; pyruvate from D-glyceraldehyde 3-phosphate: step 3/5. Its function is as follows. Catalyzes the interconversion of 2-phosphoglycerate and 3-phosphoglycerate. This chain is 2,3-bisphosphoglycerate-independent phosphoglycerate mutase, found in Anaplasma marginale (strain St. Maries).